A 477-amino-acid chain; its full sequence is Proton-coupled amino acid transporter 3 (477 aa).

The segment covering 1 to 13 (MGKTPLLREDGRC) has biased composition (basic and acidic residues). The disordered stretch occupies residues 1 to 42 (MGKTPLLREDGRCQRNTFGGSKASSKGSSSSSSNNTVSSKKK). Topologically, residues 1–54 (MGKTPLLREDGRCQRNTFGGSKASSKGSSSSSSNNTVSSKKKPRRKADALMFIQ) are cytoplasmic. A compositionally biased stretch (low complexity) spans 19-38 (GGSKASSKGSSSSSSNNTVS). A helical membrane pass occupies residues 55-75 (IFIHLLKSNIGTGFLGLPLAV). The Extracellular segment spans residues 76 to 77 (KN). A helical membrane pass occupies residues 78–98 (AGLLVGPVSLLAIGALTVHCM). Residues 99–144 (DILLNCACHLTSRLQRSFVNYEETTMYSLETCPSPWLRTHSVWGRY) are Cytoplasmic-facing. The helical transmembrane segment at 145-165 (VVSFLLIVTQLGFCSVYFMFM) threads the bilayer. At 166–202 (ADNLQQIVEEAHFTSNVCQPRQSLVMTSILDTRFYML) the chain is on the extracellular side. A helical transmembrane segment spans residues 203-223 (TILPFLILLVLVQNPQVLSIF). Residues 224–225 (ST) are Cytoplasmic-facing. The chain crosses the membrane as a helical span at residues 226–246 (LATITTLSSLALIFEYLIQIP). The Extracellular portion of the chain corresponds to 247 to 259 (HHSHLPLVASWKT). Residues 260 to 280 (FLLFFGTAIFTFEGVGMVLPL) form a helical membrane-spanning segment. Over 281–291 (KSQMKSPQQFP) the chain is Cytoplasmic. Residues 292-312 (AVLYLGMSFVIFLYICLGTLG) traverse the membrane as a helical segment. Over 313–344 (YMKFGADTQASITLNLPNCWLYQSVKLMYSVG) the chain is Extracellular. Residues 345–365 (IFFTYALQFHVPAEIIVPYVV) traverse the membrane as a helical segment. Residues 366–374 (SRASENWAL) lie on the Cytoplasmic side of the membrane. A helical membrane pass occupies residues 375 to 395 (FIDLTVRAALVCLTCFSAVLI). Residues 396–399 (PRLD) lie on the Extracellular side of the membrane. A helical membrane pass occupies residues 400 to 420 (LVISLVGSVSSSALALIIPPL). At 421 to 439 (LEIATFYSENISCTTIAKD) the chain is on the cytoplasmic side. A helical membrane pass occupies residues 440 to 460 (IMISILGLLGCVLGTYQALYE). The Extracellular portion of the chain corresponds to 461–477 (MTQQSRFPMLNSTNVHT).

It belongs to the amino acid/polyamine transporter 2 family.

It localises to the membrane. This chain is Proton-coupled amino acid transporter 3 (Slc36a3), found in Rattus norvegicus (Rat).